A 423-amino-acid polypeptide reads, in one-letter code: Protein CLP1 homolog (423 aa).

ATP is bound by residues Glu16, Lys57, and 119–124 (DVGKST).

The protein belongs to the Clp1 family. Clp1 subfamily.

It is found in the nucleus. Its function is as follows. Required for endonucleolytic cleavage during polyadenylation-dependent pre-mRNA 3'-end formation. This is Protein CLP1 homolog (cbc) from Drosophila melanogaster (Fruit fly).